The following is a 662-amino-acid chain: DCC-interacting protein 13-beta (662 aa).

The segment at 1–428 (MPAVDKLLLE…NSDIEDDNIV (428 aa)) is required for RAB5A binding. In terms of domain architecture, BAR spans 3-268 (AVDKLLLEEA…ESVYTPDIDV (266 aa)). A PH domain is found at 277–375 (LIQKTGYLNL…WICAVNNISR (99 aa)). Residues 486–635 (SLLQQMFIVR…LMLSVPLTND (150 aa)) enclose the PID domain. Positions 642-662 (NDQADDTGGSPSENRGAESEA) are disordered.

Homodimer. Homotetramer. Binds RAB5A/Rab5 through an N-terminal domain. This interaction is essential for its recruitment to endosomal membranes as well as its role in cell proliferation. Binds subunits of the NuRD/MeCP1 complex. Interacts with FSHR; interaction is independent of follicle stimulating hormone stimulation. Interacts with APPL1; the interaction is decreased by adiponectin in a time-dependent manner. Forms a complex comprising APPL1, RUVBL2, CTNNB1, HDAC1 and HDAC2; interaction reduces interaction between CTNNB1, HDAC1, HDAC2 and RUVBL2 leading to the decrease of deacetylase activity of this complex; affects the recruitment of repressive complexes to the Wnt target genes. Interacts (via BAR domain) with TBC1D1; interaction is dependent of TBC1D1 phosphorylation at 'Ser-235'; interaction diminishes the phosphorylation of TBC1D1 at 'Thr-596', resulting in inhibition of SLC2A4 translocation and glucose uptake. Interacts with ANXA2; targets APPL2 to endosomes and acting in parallel to RAB5A. Interacts with RAB31 (in GTP-bound form); interaction contributes to or enhances recruitment of APPL2 to the phagosomes; interaction enhances Fc-gamma receptor-mediated phagocytosis through PI3K/Akt signaling in macrophages. Interacts with PIK3R1; forms a complex with PIK3R1 and APPL1. Interacts (via BAR domain) with ADIPOR1; hinders the accessibility of APPL1 to ADIPOR1; negatively regulates adiponectin signaling; ADIPOQ dissociates this interaction and facilitates the recruitment of APPL1 to ADIPOR1. Interacts (via BAR domain) with ADIPOR2; ADIPOQ dissociates this interaction. In terms of tissue distribution, expressed in insulin-target tissues including skeletal muscle, liver, fat, and brain. Highly expressed in kidney and pancreas. Abundantly expressed in the ventromedial hypothalamus (VMH), barely detectable in the arcuate nucleus (ARC) and paraventricular nucleus (PVN) of the hypothalamus. Also expressed in pancreatic beta-cells.

The protein localises to the early endosome membrane. It localises to the nucleus. The protein resides in the cell membrane. Its subcellular location is the endosome membrane. It is found in the cytoplasm. The protein localises to the cytoplasmic vesicle. It localises to the phagosome. The protein resides in the cell projection. Its subcellular location is the ruffle. It is found in the ruffle membrane. The protein localises to the phagosome membrane. In terms of biological role, multifunctional adapter protein that binds to various membrane receptors, nuclear factors and signaling proteins to regulate many processes, such as cell proliferation, immune response, endosomal trafficking and cell metabolism. Regulates signaling pathway leading to cell proliferation through interaction with RAB5A and subunits of the NuRD/MeCP1 complex. Plays a role in immune response by modulating phagocytosis, inflammatory and innate immune responses. In macrophages, enhances Fc-gamma receptor-mediated phagocytosis through interaction with RAB31 leading to activation of PI3K/Akt signaling. In response to LPS, modulates inflammatory responses by playing a key role on the regulation of TLR4 signaling and in the nuclear translocation of RELA/NF-kappa-B p65 and the secretion of pro- and anti-inflammatory cytokines. Also functions as a negative regulator of innate immune response via inhibition of AKT1 signaling pathway by forming a complex with APPL1 and PIK3R1. Plays a role in endosomal trafficking of TGFBR1 from the endosomes to the nucleus. Plays a role in cell metabolism by regulating adiponectin and insulin signaling pathways and adaptative thermogenesis. In muscle, negatively regulates adiponectin-simulated glucose uptake and fatty acid oxidation by inhibiting adiponectin signaling pathway through APPL1 sequestration thereby antagonizing APPL1 action. In muscles, negatively regulates insulin-induced plasma membrane recruitment of GLUT4 and glucose uptake through interaction with TBC1D1. Plays a role in cold and diet-induced adaptive thermogenesis by activating ventromedial hypothalamus (VMH) neurons throught AMPK inhibition which enhances sympathetic outflow to subcutaneous white adipose tissue (sWAT), sWAT beiging and cold tolerance. Also plays a role in other signaling pathways namely Wnt/beta-catenin, HGF and glucocorticoid receptor signaling. Positive regulator of beta-catenin/TCF-dependent transcription through direct interaction with RUVBL2/reptin resulting in the relief of RUVBL2-mediated repression of beta-catenin/TCF target genes by modulating the interactions within the beta-catenin-reptin-HDAC complex. May affect adult neurogenesis in hippocampus and olfactory system via regulating the sensitivity of glucocorticoid receptor. Required for fibroblast migration through HGF cell signaling. In Mus musculus (Mouse), this protein is DCC-interacting protein 13-beta.